Consider the following 349-residue polypeptide: Mitochondrial carrier protein SCaMC-3L (349 aa).

A run of 4 helical transmembrane segments spans residues G88–S104, G149–F168, L188–M205, and Y243–Y261. Solcar repeat units follow at residues G88–Y174 and P182–L267.

The protein belongs to the mitochondrial carrier (TC 2.A.29) family.

The protein localises to the mitochondrion inner membrane. The enzyme catalyses Mg(2+)(out) + phosphate(in) + ATP(out) = Mg(2+)(in) + phosphate(out) + ATP(in). It carries out the reaction ADP(out) + phosphate(in) + H(+)(out) = ADP(in) + phosphate(out) + H(+)(in). Its function is as follows. Calcium-independent ATP-Mg/Pi exchanger that catalyzes the electroneutral exchange of Mg-ATP or free ADP against an hydrogenphosphate and participates in the net transport of adenine nucleotides across the mitochondria inner membrane. The chain is Mitochondrial carrier protein SCaMC-3L from Bos taurus (Bovine).